The following is a 376-amino-acid chain: MSEIAEVVPKIIEAIFSSVQEPFKTFNITIKPLENSRSFWSECYQILVTPNSEAHADKVVSPIFVKIPRISAINAACDPDNADENMEILRTLTAQEVTFYSDFSGIQFSGFPIPRSYYGENLGNEKMAGLACEDYSGKVYSIDFVPGFDESQVLQLLEALAHFHAKIIEISDEIPWKNYENVLYDAAYIRMLHNDTLDFEKLCPAELSGRIQEVKHAFDEDGVRNSEKKNEKLGMPLVICHNDLNASNVLWNNETGKIQAFIDFQHVSKGPVSFDIIRILCLGLSVENRRANTQRYLNHYYTTFKSHFSTAPFTFSQLEESYRTHFNFVNATSLFSLSYYYKMYKDESLDLKSGADEREHKAQEILRRTIGILDDM.

Belongs to the choline/ethanolamine kinase family.

This is an uncharacterized protein from Caenorhabditis elegans.